The following is a 20-amino-acid chain: Beta-1,3-glucan-binding protein 2 (20 aa).

This sequence belongs to the insect beta-1,3-glucan binding protein family. Monomer.

The protein resides in the secreted. Involved in the recognition of invading microorganisms causing their aggregation. Activates the phenoloxidase cascade. Binds specifically to beta-1,3-glucan. Binds the A.niger cell wall component alpha-1,3-glucan, a fungal pathogen-associated molecular pattern (PAMP) that activates the host immune response. This chain is Beta-1,3-glucan-binding protein 2, found in Galleria mellonella (Greater wax moth).